A 390-amino-acid polypeptide reads, in one-letter code: Cold-responsive protein kinase 1 (390 aa).

A Protein kinase domain is found at 41–320 (FSAENKIGEG…VRLLTGEKDI (280 aa)). ATP is bound by residues 47-55 (IGEGGFGSV) and Lys69. Tyr114 carries the phosphotyrosine modification. The Proton acceptor role is filled by Asp169. 2 positions are modified to phosphoserine: Ser173 and Ser202. A phosphothreonine mark is found at Thr203 and Thr208. Tyr216 carries the post-translational modification Phosphotyrosine. The interval 345–390 (TKTEQVNRQNYTNPSSSSNGSSRDHSNAYSSGASSANAGNTFSSTI) is disordered. Residues 354–390 (NYTNPSSSSNGSSRDHSNAYSSGASSANAGNTFSSTI) are compositionally biased toward low complexity.

Belongs to the protein kinase superfamily. Ser/Thr protein kinase family. As to quaternary structure, interacts with and phosphorylates 14-3-3 proteins. Binds to GRF6 at the plasma membrane. Autophosphorylated.

It is found in the cell membrane. It catalyses the reaction L-seryl-[protein] + ATP = O-phospho-L-seryl-[protein] + ADP + H(+). The catalysed reaction is L-threonyl-[protein] + ATP = O-phospho-L-threonyl-[protein] + ADP + H(+). Its activity is regulated as follows. Activated by cold. Its function is as follows. Negative regulator of freezing tolerance that phosphorylates 14-3-3 proteins (e.g. GRF6) thus triggering their translocation from the cytosol to the nucleus in response to cold stress. In Arabidopsis thaliana (Mouse-ear cress), this protein is Cold-responsive protein kinase 1.